The chain runs to 441 residues: Putative cytochrome P450 138 (441 aa).

Cys-388 is a binding site for heme.

It belongs to the cytochrome P450 family. Heme is required as a cofactor.

The sequence is that of Putative cytochrome P450 138 (cyp138) from Mycobacterium bovis (strain ATCC BAA-935 / AF2122/97).